A 340-amino-acid chain; its full sequence is GTP 3',8-cyclase (340 aa).

Residues 8-227 (KLGRPIRDLR…TMIEQHFEID (220 aa)) enclose the Radical SAM core domain. GTP is bound at residue R17. [4Fe-4S] cluster is bound by residues C24 and C28. Residue Y30 participates in S-adenosyl-L-methionine binding. A [4Fe-4S] cluster-binding site is contributed by C31. R71 lines the GTP pocket. G75 lines the S-adenosyl-L-methionine pocket. Residue T102 coordinates GTP. S126 is a binding site for S-adenosyl-L-methionine. K163 provides a ligand contact to GTP. M197 is an S-adenosyl-L-methionine binding site. The [4Fe-4S] cluster site is built by C261 and C264. 266–268 (RAR) serves as a coordination point for GTP. C278 provides a ligand contact to [4Fe-4S] cluster.

The protein belongs to the radical SAM superfamily. MoaA family. In terms of assembly, monomer and homodimer. Requires [4Fe-4S] cluster as cofactor.

The enzyme catalyses GTP + AH2 + S-adenosyl-L-methionine = (8S)-3',8-cyclo-7,8-dihydroguanosine 5'-triphosphate + 5'-deoxyadenosine + L-methionine + A + H(+). Its pathway is cofactor biosynthesis; molybdopterin biosynthesis. Functionally, catalyzes the cyclization of GTP to (8S)-3',8-cyclo-7,8-dihydroguanosine 5'-triphosphate. In Staphylococcus aureus (strain Mu3 / ATCC 700698), this protein is GTP 3',8-cyclase.